The following is a 240-amino-acid chain: Ribonuclease PH (240 aa).

Phosphate contacts are provided by residues Arg87 and 125-127 (GTR).

It belongs to the RNase PH family. As to quaternary structure, homohexameric ring arranged as a trimer of dimers.

It carries out the reaction tRNA(n+1) + phosphate = tRNA(n) + a ribonucleoside 5'-diphosphate. Its function is as follows. Phosphorolytic 3'-5' exoribonuclease that plays an important role in tRNA 3'-end maturation. Removes nucleotide residues following the 3'-CCA terminus of tRNAs; can also add nucleotides to the ends of RNA molecules by using nucleoside diphosphates as substrates, but this may not be physiologically important. Probably plays a role in initiation of 16S rRNA degradation (leading to ribosome degradation) during starvation. The sequence is that of Ribonuclease PH from Pseudomonas syringae pv. syringae (strain B728a).